The primary structure comprises 664 residues: ATP-dependent zinc metalloprotease FtsH (664 aa).

Over 1–9 (MKQNIKRNW) the chain is Cytoplasmic. Residues 10 to 30 (IWILIVMIVIGIILYFSIRNL) form a helical membrane-spanning segment. At 31-136 (FSTKVAEWSI…KSVATPQPNP (106 aa)) the chain is on the extracellular side. Residues 137 to 157 (FLGILISSVPVLILIFVMVWI) form a helical membrane-spanning segment. Residues 158–664 (YRSQVKMMNG…SLIEKTSKKE (507 aa)) are Cytoplasmic-facing. Position 229-236 (229-236 (GPPGTGKT)) interacts with ATP. His451 lines the Zn(2+) pocket. The active site involves Glu452. Zn(2+) contacts are provided by His455 and Asp529. Residues 639-649 (IEEKDLSKNSE) are compositionally biased toward basic and acidic residues. The segment at 639 to 664 (IEEKDLSKNSEDNNLDSLIEKTSKKE) is disordered.

The protein in the central section; belongs to the AAA ATPase family. This sequence in the C-terminal section; belongs to the peptidase M41 family. Homohexamer. Zn(2+) is required as a cofactor.

The protein resides in the cell membrane. Its function is as follows. Acts as a processive, ATP-dependent zinc metallopeptidase for both cytoplasmic and membrane proteins. Plays a role in the quality control of integral membrane proteins. The protein is ATP-dependent zinc metalloprotease FtsH of Mycoplasmopsis synoviae (strain 53) (Mycoplasma synoviae).